The chain runs to 92 residues: MARSLKKGPFVDGHLMTKIEKLNETDKKQVVKTWSRRSTIFPQFIGHTIAVYDGRKHVPVFISEDMVGHKLGEFAPTRTYKGHASDDKKTRR.

It belongs to the universal ribosomal protein uS19 family. As to quaternary structure, part of the 30S ribosomal subunit.

Its function is as follows. Protein S19 forms a complex with S13 that binds strongly to the 16S ribosomal RNA. The polypeptide is Small ribosomal subunit protein uS19 (rpsS) (Bacillus subtilis (strain 168)).